The primary structure comprises 167 residues: Ureidoglycolate lyase (167 aa).

This sequence belongs to the ureidoglycolate lyase family. Homodimer. The cofactor is Ni(2+).

The catalysed reaction is (S)-ureidoglycolate = urea + glyoxylate. Its pathway is nitrogen metabolism; (S)-allantoin degradation. Catalyzes the catabolism of the allantoin degradation intermediate (S)-ureidoglycolate, generating urea and glyoxylate. Involved in the utilization of allantoin as nitrogen source. This Pseudomonas putida (strain ATCC 700007 / DSM 6899 / JCM 31910 / BCRC 17059 / LMG 24140 / F1) protein is Ureidoglycolate lyase.